The chain runs to 394 residues: GDNF family receptor alpha-like (394 aa).

Residues 1–18 (MIVFIFLAMGLSLENEYT) form the signal peptide. The Extracellular portion of the chain corresponds to 19–351 (SQTNNCTYLR…TGFHSPFNGE (333 aa)). Residues Asn23, Asn50, Asn62, Asn67, Asn103, and Asn116 are each glycosylated (N-linked (GlcNAc...) asparagine). Cystine bridges form between Cys131–Cys189, Cys138–Cys144, Cys155–Cys167, Cys162–Cys210, Cys191–Cys198, Cys220–Cys291, Cys227–Cys233, Cys244–Cys275, Cys252–Cys258, Cys269–Cys316, and Cys293–Cys304. The tract at residues 149 to 228 (ASYLKACSAN…TCLSVIRSCQ (80 aa)) is required for interaction with GDF15. Residues 352 to 371 (VIYAAMCMTVTCGILLLVMV) form a helical membrane-spanning segment. The Cytoplasmic portion of the chain corresponds to 372–394 (KLRTSRISSKARDPSSIQIPGEL).

Belongs to the GDNFR family. Interacts (via the extracellular domain) with GDF15 and RET; receptor of GDF15, mediates cellular signaling through interaction with RET after GDF15-binding. Interaction with RET requires previous GDF15-binding. Cleaved and inactivated by MMP14, inhibiting the GDF15-GFRAL aversive response. In terms of tissue distribution, expressed in the brainstem, restricted to cells in the area postrema and the immediately adjacent region of the nucleus tractus solitarius (at protein level). Detected at low levels in testis and adipose tissue.

Its subcellular location is the cell membrane. With respect to regulation, specifically inhibited by 3P10 monoclonal antibody. Strongly activated by LY3463251, a long-acting and stable agonist composed of GDF15 conjugated monomeric human IgG4 Fc. Functionally, brainstem-restricted receptor for GDF15 hormone, which triggers an aversive response, characterized by nausea, vomiting, and/or loss of appetite in response to various stresses. The aversive response is both required to reduce continuing exposure to those stresses at the time of exposure and to promote avoidance behavior in the future. The GDF15-GFRAL aversive response is triggered by stresses, such as anticancer drugs (camptothecin or cisplatin), cancers or drugs such as metformin. Upon interaction with its ligand, GDF15, mediates the GDF15-induced autophosphorylation and activation of the RET tyrosine kinase receptor, leading to activation of MAPK- and AKT- signaling pathways. Ligand-binding activates GFRAL-expressing neurons localized in the area postrema and nucleus tractus solitarius of the brainstem. The GDF15-GFRAL signal induces expression of genes involved in metabolism, such as lipid metabolism in adipose tissues. In Homo sapiens (Human), this protein is GDNF family receptor alpha-like.